We begin with the raw amino-acid sequence, 140 residues long: Small ribosomal subunit protein bS6 (140 aa).

A disordered region spans residues 96–140 (VTGQSEMLKAEENRSERRERRERPENAESNDGDDSDSNDSDNADE). Residues 103–121 (LKAEENRSERRERRERPEN) are compositionally biased toward basic and acidic residues. Residues 123 to 140 (ESNDGDDSDSNDSDNADE) are compositionally biased toward acidic residues.

Belongs to the bacterial ribosomal protein bS6 family.

In terms of biological role, binds together with bS18 to 16S ribosomal RNA. The protein is Small ribosomal subunit protein bS6 of Ectopseudomonas mendocina (strain ymp) (Pseudomonas mendocina).